Here is a 468-residue protein sequence, read N- to C-terminus: MGDNVQSDTTAAQAGITDAPTAPTSAPVSLKERLEKLIESSQQLIKRMDENNIPDPTFAPECQEDYSKLPPETITERFALLDLLNDVTFLVHGASQSITDVAQNAMADSATLNILNYFNFWDVIPLDGDASFAEIAKAVRLPQEAVEAILPYAFSNRIFEPVTIGDPNSRIRHTSRSAAMIKDPTLRIIVNLTIDGLAGPLSILNRALEKNFLGKEKLTNEISETPFGMLYNKGGPLGEYKDYYDWLDRDGEGERKGWRQRDMVESLRLAKEKMGAESALLEALDWAGAGKATVVDLGGSGGHDDVPLAEKFPDLKIIVQDLPSCQPKFDDGYISDELKKRVSFLAHDFFTPQPVQADIYLFKWVFYDWSNKDIVKIIKALVPALRPGARVLVLDLMVDVGPEAAAVMPRSLLKYSNVISLKTLSLFGHTKQATKKMTDLFKAADDRFEIVRDEVAGTFMTFEAVWRG.

Polar residues predominate over residues 1 to 12 (MGDNVQSDTTAA). Residues 1–29 (MGDNVQSDTTAAQAGITDAPTAPTSAPVS) are disordered. S-adenosyl-L-methionine contacts are provided by residues 298–299 (GG), D321, 348–349 (DF), and K363.

Belongs to the class I-like SAM-binding methyltransferase superfamily. Cation-independent O-methyltransferase family.

The protein operates within secondary metabolite biosynthesis. O-methyltransferase; part of the gene cluster that mediates the biosynthesis of the lipopeptide antibiotics leucinostatins that show extensive biological activities, including antimalarial, antiviral, antibacterial, antifungal, and antitumor activities, as well as phytotoxic. Leucinostatin A contains nine amino acid residues, including the unusual amino acid 4-methyl-L-proline (MePro), 2-amino-6-hydroxy-4-methyl-8-oxodecanoic acid (AHyMeOA), 3-hydroxyleucine (HyLeu), alpha-aminoisobutyric acid (AIB), beta-Ala, a 4-methylhex-2-enoic acid at the N-terminus as well as a N1,N1-dimethylpropane-1,2-diamine (DPD) at the C-terminus. The biosynthesis of leucinostatins is probably initiated with the assembly of 4-methylhex-2-enoic acid by a reducing PKS. Two reducing polyketide synthases, lcsB and lcsC, have been identified in the cluster and it is not clear which is the one that assembles 4-methylhex-2-enoic acid since both contain KS, AT, DH, cMT, ER, KR and ACP domains. The polyketide residue might be transferred to the NRPS lcsA, mediated by two additional enzymes, the acyl-CoA ligase lcsD and the thioesterase lcsE. The linear polyketide carboxylic acid, which is released from PKS, is converted to a CoA thioester by lcsD, and then lcsE hydrolyzes the thiol bond and shuttles the polyketide intermediate to lcsA. The C domain of the first module catalyzed the condensation of 4-methylhex-2-enoic acid and MePro carried by domain A1, followed by successive condensations of nine amino acids to trigger the elongation of the linear peptide. A5 and A6 domains of lcsA are proposed to incorporate leucine, A2 AHyMeOA, and A3 incorporates HyLeu. A4, A7 and A8 incorporate AIB. The AHyMeOA in leucinostatin A activated by the A2 might be produced by the second PKS (lcsB or lcsC) present within the cluster. The MePro is probably produced via leucine cyclization and may originate from a separate pathway, independent of the cluster. Another nonproteinogenic amino acid, beta-Ala, could be produced by an aspartic acid decarboxylase also localized outside of the cluster. Two candidates are VFPBJ_01400 and VFPBJ_10476. The final peptide scaffold may be released by the NAD(P)H-dependent thioester reductase (TE) at the C-terminal region of lcsA. Transamination of the lcsA product by the transaminase lcsP may produce DPD at the C-terminus. Further hydroxylation steps performed alternatively by the cytochrome P450 monooxygenases lcsI, lcsK and lcsN then yield the non-methylated leucinostatins precursor. It is also possible that leucines can be hydroxylated prior to their incorporation into the peptide. Varying extents of methylation then lead to the formation of leucinostatins A and B. This Purpureocillium lilacinum (Paecilomyces lilacinus) protein is O-methyltransferase lcsG.